The chain runs to 261 residues: Uridine-cytidine kinase 2 (261 aa).

The tract at residues 1–24 (MAGDSEQALPKHSPQNGQPFLIGV) is disordered. 26 to 34 (GGTASGKSS) contacts ATP. Residues Asp83, Tyr111, His116, Arg165, Arg175, and Gln183 each coordinate substrate. ATP is bound at residue Asp212. Polar residues predominate over residues 238–247 (NGYTNGFTSP). A disordered region spans residues 238 to 261 (NGYTNGFTSPRTRHPSDSNSSRPH).

This sequence belongs to the uridine kinase family. As to quaternary structure, homotetramer.

The enzyme catalyses uridine + ATP = UMP + ADP + H(+). It catalyses the reaction cytidine + ATP = CMP + ADP + H(+). It participates in pyrimidine metabolism; CTP biosynthesis via salvage pathway; CTP from cytidine: step 1/3. The protein operates within pyrimidine metabolism; UMP biosynthesis via salvage pathway; UMP from uridine: step 1/1. Phosphorylates uridine and cytidine to uridine monophosphate and cytidine monophosphate. Does not phosphorylate deoxyribonucleosides or purine ribonucleosides. Can use ATP or GTP as a phosphate donor. This Xenopus tropicalis (Western clawed frog) protein is Uridine-cytidine kinase 2 (uck2).